The sequence spans 95 residues: Probable dolichol-phosphate mannosyltransferase subunit 3 (95 aa).

The next 2 helical transmembrane spans lie at Ala-10 to Leu-30 and Ala-44 to Val-64.

Belongs to the DPM3 family.

It localises to the endoplasmic reticulum membrane. It functions in the pathway protein modification; protein glycosylation. Stabilizer subunit of the dolichol-phosphate-mannose synthase complex. In Caenorhabditis elegans, this protein is Probable dolichol-phosphate mannosyltransferase subunit 3 (dpm-3).